A 189-amino-acid chain; its full sequence is Cytochrome b6-f complex subunit 4 (189 aa).

The next 3 helical transmembrane spans lie at 36–56 (LSYI…GLAV), 103–123 (LLGV…PFLE), and 139–159 (TVSL…ALPI).

The protein belongs to the cytochrome b family. PetD subfamily. As to quaternary structure, the 4 large subunits of the cytochrome b6-f complex are cytochrome b6, subunit IV (17 kDa polypeptide, petD), cytochrome f and the Rieske protein, while the 4 small subunits are petG, petL, petM and petN. The complex functions as a dimer.

It localises to the plastid. The protein resides in the chloroplast thylakoid membrane. Component of the cytochrome b6-f complex, which mediates electron transfer between photosystem II (PSII) and photosystem I (PSI), cyclic electron flow around PSI, and state transitions. The polypeptide is Cytochrome b6-f complex subunit 4 (Pinus koraiensis (Korean pine)).